The chain runs to 99 residues: Putative protein adenylyltransferase MJ0141 (99 aa).

The GSX(10)DXD motif signature appears at 29–43; it reads GSYARGDYDEESDVD. 2 residues coordinate Mg(2+): D41 and D43.

This sequence belongs to the MntA antitoxin family. Requires Mg(2+) as cofactor.

It catalyses the reaction L-tyrosyl-[protein] + ATP = O-(5'-adenylyl)-L-tyrosyl-[protein] + diphosphate. The enzyme catalyses O-(5'-adenylyl)-L-tyrosyl-[protein] + ATP = O-[5'-(adenylyl-(5'-&gt;3')-adenylyl)]-L-tyrosyl-[protein] + diphosphate. Putative antitoxin component of a putative type VII toxin-antitoxin (TA) system. Its cognate toxin might be MF0142, which it might AMPylate. This Methanocaldococcus jannaschii (strain ATCC 43067 / DSM 2661 / JAL-1 / JCM 10045 / NBRC 100440) (Methanococcus jannaschii) protein is Putative protein adenylyltransferase MJ0141.